The chain runs to 764 residues: Phenylalanine--tRNA ligase beta subunit (764 aa).

The tRNA-binding domain occupies 38-148 (CIAPKNVVVG…GELVLGKELN (111 aa)). Residues 375–455 (LKDRTLTFQL…RFVGIDNLVS (81 aa)) enclose the B5 domain. 4 residues coordinate Mg(2+): Asp433, Asp439, Glu442, and Glu443. Residues 673 to 763 (SIYPSSVRDL…LEKEFNARLK (91 aa)) form the FDX-ACB domain.

This sequence belongs to the phenylalanyl-tRNA synthetase beta subunit family. Type 1 subfamily. As to quaternary structure, tetramer of two alpha and two beta subunits. Mg(2+) is required as a cofactor.

The protein localises to the cytoplasm. It catalyses the reaction tRNA(Phe) + L-phenylalanine + ATP = L-phenylalanyl-tRNA(Phe) + AMP + diphosphate + H(+). The protein is Phenylalanine--tRNA ligase beta subunit (pheT) of Helicobacter pylori (strain ATCC 700392 / 26695) (Campylobacter pylori).